The sequence spans 31 residues: Ice-structuring glycoprotein 3 (31 aa).

Residues Thr-3, Thr-6, Thr-9, Thr-12, Thr-15, Thr-18, Thr-21, Thr-24, Thr-27, and Thr-30 are each glycosylated (O-linked (GalNAc...) threonine).

In terms of processing, O-linked glycans consist of Gal-GalNAc disaccharides. The three proteins may differ only in the number of repeating units of -Ala-Ala-Thr-.

The protein resides in the secreted. Its function is as follows. Antifreeze proteins lower the blood freezing point. This fish lives in antarctic waters where it experiences water temperatures near -1.9 degrees Celsius. Its blood has a freezing point of about -2.0 degrees Celsius, and 30% of the freezing-point depression is due mainly to the 3 major high molecular weight glycoproteins in the plasma. The polypeptide is Ice-structuring glycoprotein 3 (Pagothenia borchgrevinki (Bald rockcod)).